A 144-amino-acid chain; its full sequence is Large ribosomal subunit protein uL15 (144 aa).

The disordered stretch occupies residues 1-56; the sequence is MELNNLKPAAGAKHAKRRVGRGIGSGLGKTAGRGHKGQKSRSGGFHKVGFEGGQMP. The span at 21–31 shows a compositional bias: gly residues; it reads RGIGSGLGKTA.

Belongs to the universal ribosomal protein uL15 family. In terms of assembly, part of the 50S ribosomal subunit.

Binds to the 23S rRNA. This chain is Large ribosomal subunit protein uL15, found in Burkholderia ambifaria (strain MC40-6).